We begin with the raw amino-acid sequence, 187 residues long: Adenine phosphoribosyltransferase (187 aa).

133 to 137 (ATGGS) serves as a coordination point for AMP.

It belongs to the purine/pyrimidine phosphoribosyltransferase family. As to quaternary structure, homodimer. Mg(2+) serves as cofactor.

It is found in the cytoplasm. The protein resides in the nucleus. The catalysed reaction is AMP + diphosphate = 5-phospho-alpha-D-ribose 1-diphosphate + adenine. It functions in the pathway purine metabolism; AMP biosynthesis via salvage pathway; AMP from adenine: step 1/1. In terms of biological role, catalyzes a salvage reaction resulting in the formation of AMP, that is energically less costly than de novo synthesis. The chain is Adenine phosphoribosyltransferase (APT1) from Kluyveromyces lactis (strain ATCC 8585 / CBS 2359 / DSM 70799 / NBRC 1267 / NRRL Y-1140 / WM37) (Yeast).